Consider the following 278-residue polypeptide: Small ribosomal subunit protein uS3 (278 aa).

Positions 39 to 107 (LRKAIAKKYV…KVQLNIVEIS (69 aa)) constitute a KH type-2 domain. A disordered region spans residues 244 to 278 (AKPKRVTKKAEAEASAEEKPKRAAKKAENITKEEE). Residues 251–278 (KKAEAEASAEEKPKRAAKKAENITKEEE) are compositionally biased toward basic and acidic residues.

This sequence belongs to the universal ribosomal protein uS3 family. As to quaternary structure, part of the 30S ribosomal subunit. Forms a tight complex with proteins S10 and S14.

Its function is as follows. Binds the lower part of the 30S subunit head. Binds mRNA in the 70S ribosome, positioning it for translation. This Dehalococcoides mccartyi (strain ATCC BAA-2266 / KCTC 15142 / 195) (Dehalococcoides ethenogenes (strain 195)) protein is Small ribosomal subunit protein uS3.